A 158-amino-acid chain; its full sequence is Transcription elongation factor GreA (158 aa).

Positions 47 to 74 form a coiled coil; sequence AEYHAAKEEQSHNEGRIAELEDKLARAD.

This sequence belongs to the GreA/GreB family.

Its function is as follows. Necessary for efficient RNA polymerase transcription elongation past template-encoded arresting sites. The arresting sites in DNA have the property of trapping a certain fraction of elongating RNA polymerases that pass through, resulting in locked ternary complexes. Cleavage of the nascent transcript by cleavage factors such as GreA or GreB allows the resumption of elongation from the new 3'terminus. GreA releases sequences of 2 to 3 nucleotides. This is Transcription elongation factor GreA from Nitrobacter winogradskyi (strain ATCC 25391 / DSM 10237 / CIP 104748 / NCIMB 11846 / Nb-255).